A 361-amino-acid polypeptide reads, in one-letter code: U7 snRNA-associated Sm-like protein LSm11 (361 aa).

Residues 1 to 26 (MEEREWGARSARAGSPASPPSPRLDV) form a disordered region. A phosphoserine mark is found at Ser-15 and Ser-21. Position 41 is an omega-N-methylarginine (Arg-41). Residues 67-142 (RTGRGRARGT…QGPGRSKKAP (76 aa)) are disordered. A compositionally biased stretch (low complexity) spans 76 to 96 (TGEPASAGTSTGTSTGAGSSS). A Glycyl lysine isopeptide (Lys-Gly) (interchain with G-Cter in SUMO2) cross-link involves residue Lys-121. Ser-155 is subject to Phosphoserine. Residues 155–230 (SPLGELHRCI…LTLTRLFDRL (76 aa)) enclose the Sm domain. Positions 172-205 (VHIRTFKGLRGVCTGFLVAFDKFWNMALTDVDET) are SM 1. Positions 268–335 (RGDTDRSSHR…RKKKRKPKVD (68 aa)) are disordered. Position 281 is a phosphoserine (Ser-281). A compositionally biased stretch (polar residues) spans 307-323 (GSSVGGTFSRATTLSRG). The segment at 344 to 357 (INQIFIRGENVLLV) is SM 2.

This sequence belongs to the snRNP Sm proteins family. In terms of assembly, component of the heptameric ring U7 snRNP complex, or U7 Sm protein core complex, at least composed of LSM10, LSM11, SNRPB, SNRPD3, SNRPE, SNRPF, SNRPG and U7 snRNA. Formation of the U7 snRNP is an ATP-dependent process mediated by a specialized SMN complex containing at least the Sm protein core complex and additionally, the U7-specific LSM10 and LSM11 proteins. Identified in a histone pre-mRNA complex, at least composed of ERI1, LSM11, SLBP, SNRPB, SYNCRIP and YBX1. Interacts (via the Sm domains) with CLNS1A. Interacts with PRMT5, SMN, ZNF473 and WDR77. Not methylated.

It localises to the nucleus. Functionally, component of the U7 snRNP complex that is involved in the histone 3'-end pre-mRNA processing. Increases U7 snRNA levels but not histone 3'-end pre-mRNA processing activity, when overexpressed. Required for cell cycle progression from G1 to S phases. Binds specifically to the Sm-binding site of U7 snRNA. In Mus musculus (Mouse), this protein is U7 snRNA-associated Sm-like protein LSm11.